The primary structure comprises 487 residues: Betaine aldehyde dehydrogenase (487 aa).

Residues Ile-27 and Asp-93 each coordinate K(+). 149-151 (GAW) provides a ligand contact to NAD(+). Catalysis depends on Lys-161, which acts as the Charge relay system. NAD(+) is bound by residues 175-178 (KPSE) and 228-231 (SVPT). K(+) is bound at residue Leu-243. Residue Glu-249 is the Proton acceptor of the active site. Positions 251, 283, and 384 each coordinate NAD(+). Cys-283 acts as the Nucleophile in catalysis. Cys-283 is modified (cysteine sulfenic acid (-SOH)). Positions 454 and 457 each coordinate K(+). The active-site Charge relay system is Glu-461.

It belongs to the aldehyde dehydrogenase family. As to quaternary structure, dimer of dimers. K(+) is required as a cofactor.

The enzyme catalyses betaine aldehyde + NAD(+) + H2O = glycine betaine + NADH + 2 H(+). It functions in the pathway amine and polyamine biosynthesis; betaine biosynthesis via choline pathway; betaine from betaine aldehyde: step 1/1. In terms of biological role, involved in the biosynthesis of the osmoprotectant glycine betaine. Catalyzes the irreversible oxidation of betaine aldehyde to the corresponding acid. In Brucella suis (strain ATCC 23445 / NCTC 10510), this protein is Betaine aldehyde dehydrogenase.